Here is a 182-residue protein sequence, read N- to C-terminus: Adenine phosphoribosyltransferase (182 aa).

Belongs to the purine/pyrimidine phosphoribosyltransferase family. Homodimer.

The protein localises to the cytoplasm. The enzyme catalyses AMP + diphosphate = 5-phospho-alpha-D-ribose 1-diphosphate + adenine. Its pathway is purine metabolism; AMP biosynthesis via salvage pathway; AMP from adenine: step 1/1. Its function is as follows. Catalyzes a salvage reaction resulting in the formation of AMP, that is energically less costly than de novo synthesis. This chain is Adenine phosphoribosyltransferase, found in Campylobacter curvus (strain 525.92).